The following is a 774-amino-acid chain: E3 ubiquitin-protein ligase UHRF1 (774 aa).

Residues 1–78 (MWIQVRTMDG…IQLLVRQSLA (78 aa)) form the Ubiquitin-like domain. 5 positions are modified to phosphoserine: Ser76, Ser91, Ser93, Ser95, and Ser161. The segment at 83-120 (TKERDSELSDSDSGYGVGHSESDKSSTHGEGTADGDDK) is disordered. Tudor-like regions lie at residues 129–205 (GLYK…ARAR) and 212–280 (DLEV…IELP). Residue Lys276 forms a Glycyl lysine isopeptide (Lys-Gly) (interchain with G-Cter in SUMO2) linkage. The residue at position 284 (Ser284) is a Phosphoserine. The tract at residues 293–298 (RKSGPS) is linker. Ser295 bears the Phosphoserine; by PKA mark. A PHD-type zinc finger spans residues 296–363 (GPSCQYCKDD…EWYCPSCRTD (68 aa)). Histone H3R2me0 binding regions lie at residues 330 to 334 (CDECD) and 350 to 352 (PPE). Residue Ser365 is modified to Phosphoserine. Lys382 is covalently cross-linked (Glycyl lysine isopeptide (Lys-Gly) (interchain with G-Cter in SUMO2)). Residues 382–605 (KMASATSSSR…QLGLTMQYPE (224 aa)) are methyl-CpG binding and interaction with HDAC1. An N6-acetyllysine modification is found at Lys396. In terms of domain architecture, YDG spans 416–578 (GPIPGVPVGT…FIVWRYLLRR (163 aa)). The interval 442 to 443 (HV) is required to promote base flipping. Residues 460–461 (AG) and Asp466 each bind DNA. 2 required for formation of a 5-methylcytosine-binding pocket regions span residues 463–466 (YEDD) and 475–478 (YTGS). Ser511 carries the phosphoserine modification. At Lys542 the chain carries N6-acetyllysine; alternate. A Glycyl lysine isopeptide (Lys-Gly) (interchain with G-Cter in SUMO2); alternate cross-link involves residue Lys542. The disordered stretch occupies residues 616-657 (KNRKRPAKALEQGPSSSKIGKSKRKSTGPATTSPRVSKKSKL). At Ser631 the chain carries Phosphoserine; by CDK1. Ser641 and Ser648 each carry phosphoserine. Lys656 is covalently cross-linked (Glycyl lysine isopeptide (Lys-Gly) (interchain with G-Cter in SUMO2)). The RING-type zinc-finger motif lies at 705–744 (CICCQELVFRPVTTVCQHNVCKDCLDRSFRAQVFSCPACR). Phosphoserine is present on Ser751.

In terms of assembly, interacts with DNMT3A and DNMT3B. Interacts with DNMT1; the interaction is direct. Interacts with USP7; leading to its deubiquitination. Interacts with histone H3. Interacts with HDAC1, but not with HDAC2. Interacts with BLTP3A. Interacts with PML. Interacts with EHMT2. Binds methylated CpG containing oligonucleotides. Interacts with ZNF263; recruited to the SIX3 promoter along with other proteins involved in chromatin modification and transcriptional corepression where it contributes to transcriptional repression. Interacts with UHRF2. Interacts with FANCD2. Interacts with TET1 isoform 2; this interaction induces the recruitment of TET1 isoform 2 to replicating heterochromatin. Post-translationally, phosphorylation at Ser-295 of the linker region decreases the binding to H3K9me3. Phosphorylation at Ser-631 by CDK1 during M phase impairs interaction with USP7, preventing deubiquitination and leading to degradation by the proteasome. Ubiquitinated; which leads to proteasomal degradation. Autoubiquitinated; interaction with USP7 leads to deubiquitination and prevents degradation. Ubiquitination and degradation takes place during M phase, when phosphorylation at Ser-631 prevents interaction with USP7 and subsequent deubiquitination. Polyubiquitination may be stimulated by DNA damage.

It is found in the nucleus. The catalysed reaction is S-ubiquitinyl-[E2 ubiquitin-conjugating enzyme]-L-cysteine + [acceptor protein]-L-lysine = [E2 ubiquitin-conjugating enzyme]-L-cysteine + N(6)-ubiquitinyl-[acceptor protein]-L-lysine.. It functions in the pathway protein modification; protein ubiquitination. Its function is as follows. Multidomain protein that acts as a key epigenetic regulator by bridging DNA methylation and chromatin modification. Specifically recognizes and binds hemimethylated DNA at replication forks via its YDG domain and recruits DNMT1 methyltransferase to ensure faithful propagation of the DNA methylation patterns through DNA replication. In addition to its role in maintenance of DNA methylation, also plays a key role in chromatin modification: through its tudor-like regions and PHD-type zinc fingers, specifically recognizes and binds histone H3 trimethylated at 'Lys-9' (H3K9me3) and unmethylated at 'Arg-2' (H3R2me0), respectively, and recruits chromatin proteins. Enriched in pericentric heterochromatin where it recruits different chromatin modifiers required for this chromatin replication. Also localizes to euchromatic regions where it negatively regulates transcription possibly by impacting DNA methylation and histone modifications. Has E3 ubiquitin-protein ligase activity by mediating the ubiquitination of target proteins such as histone H3 and PML. It is still unclear how E3 ubiquitin-protein ligase activity is related to its role in chromatin in vivo. Plays a role in DNA repair by cooperating with UHRF2 to ensure recruitment of FANCD2 to interstrand cross-links (ICLs) leading to FANCD2 activation. Plays a pivotal role in the establishment of correct spindle architecture by catalyzing the 'Lys-63'-linked ubiquitination of KIF11, thereby controlling KIF11 localization on the spindle. The chain is E3 ubiquitin-protein ligase UHRF1 (Uhrf1) from Rattus norvegicus (Rat).